Consider the following 319-residue polypeptide: 8-methylmenaquinol:fumarate reductase iron-sulfur subunit (319 aa).

The 2Fe-2S ferredoxin-type domain occupies 1-96 (MKFIIDRFDG…TFRISPLGNH (96 aa)). [2Fe-2S] cluster contacts are provided by cysteine 51, cysteine 56, cysteine 59, and cysteine 71. 4Fe-4S ferredoxin-type domains lie at 139–168 (FDRI…QSDY) and 193–224 (VKPA…AEDI). [4Fe-4S] cluster-binding residues include cysteine 148, cysteine 151, cysteine 154, cysteine 158, cysteine 204, cysteine 207, cysteine 210, and cysteine 214.

This sequence belongs to the succinate dehydrogenase/fumarate reductase iron-sulfur protein family. The MFR complex is composed of three subunits: a flavoprotein (SdhA), an iron-sulfur protein (SdhB), and one hydrophobic anchor protein (SdhE). The cofactor is [2Fe-2S] cluster. [4Fe-4S] cluster is required as a cofactor.

Its subcellular location is the periplasm. The protein resides in the cell membrane. It catalyses the reaction 8-methylmenaquinone-6 + succinate = 8-methylmenaquinol-6 + fumarate. Its function is as follows. Iron-sulfur subunit of 8-methylmenaquinol:fumarate reductase (MFR), that catalyzes the reduction of fumarate using 8-methylmenaquinol-6 as electron donor. The complex shows no succinate oxidation activity. Is involved in anaerobic metabolism. In Wolinella succinogenes (strain ATCC 29543 / DSM 1740 / CCUG 13145 / JCM 31913 / LMG 7466 / NCTC 11488 / FDC 602W) (Vibrio succinogenes), this protein is 8-methylmenaquinol:fumarate reductase iron-sulfur subunit.